The sequence spans 350 residues: UDP-3-O-acylglucosamine N-acyltransferase (350 aa).

The active-site Proton acceptor is His-244.

This sequence belongs to the transferase hexapeptide repeat family. LpxD subfamily. Homotrimer.

It catalyses the reaction a UDP-3-O-[(3R)-3-hydroxyacyl]-alpha-D-glucosamine + a (3R)-hydroxyacyl-[ACP] = a UDP-2-N,3-O-bis[(3R)-3-hydroxyacyl]-alpha-D-glucosamine + holo-[ACP] + H(+). It functions in the pathway bacterial outer membrane biogenesis; LPS lipid A biosynthesis. Catalyzes the N-acylation of UDP-3-O-acylglucosamine using 3-hydroxyacyl-ACP as the acyl donor. Is involved in the biosynthesis of lipid A, a phosphorylated glycolipid that anchors the lipopolysaccharide to the outer membrane of the cell. In Herminiimonas arsenicoxydans, this protein is UDP-3-O-acylglucosamine N-acyltransferase.